A 357-amino-acid chain; its full sequence is 4-hydroxyphenylpyruvate dioxygenase (357 aa).

2 VOC domains span residues 12–129 and 158–313; these read GFEF…LIDR and IIDH…IFSE. Residues His161, His240, and Glu322 each contribute to the Fe cation site.

It belongs to the 4HPPD family. Homotetramer. Fe cation serves as cofactor.

It carries out the reaction 3-(4-hydroxyphenyl)pyruvate + O2 = homogentisate + CO2. Its pathway is amino-acid degradation; L-phenylalanine degradation; acetoacetate and fumarate from L-phenylalanine: step 3/6. The sequence is that of 4-hydroxyphenylpyruvate dioxygenase (hpd) from Pseudomonas sp. (strain P.J. 874).